Reading from the N-terminus, the 248-residue chain is Tyrosine recombinase XerD-like (248 aa).

In terms of domain architecture, Core-binding (CB) spans 1–72 (MKSYIEPFIA…TANQFLYYLY (72 aa)). The 164-residue stretch at 85–248 (DTMKVMRTEK…PVTLEKYYKS (164 aa)) folds into the Tyr recombinase domain. Residues K149 and R213 contribute to the active site. The O-(3'-phospho-DNA)-tyrosine intermediate role is filled by Y245.

This sequence belongs to the 'phage' integrase family. XerD-like subfamily.

The protein localises to the cytoplasm. Functionally, putative tyrosine recombinase. Not involved in the cutting and rejoining of the recombining DNA molecules on dif(SL) site. This is Tyrosine recombinase XerD-like from Streptococcus pyogenes serotype M18 (strain MGAS8232).